The primary structure comprises 456 residues: MTKKALSAVILAAGKGTRMYSDLPKVLHTIAGKPMVKHVIDTAHQLGAENIHLIYGHGGDVMRTHLANEQVNWVLQTEQLGTAHAVQQAAPFFKDNENIVVLYGDAPLITKETLEKLIDAKPENGIALLTVNLDNPTGYGRIIRENGNVVAIVEQKDANADQLNIKEVNTGVMVSDGASFKKWLARVGNNNAQGEYYLTDLIALANQDNCQVVAVQATDVMEVEGANNRLQLAALERYLQNKQASKLLLEGVMIYDPARFDLRGTLEHGKDVEIDVNVIIEGNVKLGDRVKIGAGCVLKNVVIGNDVEIKPYSVLEDSIVGEKAAIGPFSRLRPGAELAAETHVGNFVEIKKSTVGKGSKVNHLTYVGDSEIGSNCNIGAGVITCNYDGANKFKTIIGDDVFVGSDTQLVAPVKVANGATIGAGTTITRDVGENELVITRVAQRHIQGWQRPIKKK.

The segment at 1-229 (MTKKALSAVI…VMEVEGANNR (229 aa)) is pyrophosphorylase. UDP-N-acetyl-alpha-D-glucosamine is bound by residues 11–14 (LAAG), Lys-25, Gln-76, 81–82 (GT), 103–105 (YGD), Gly-140, Glu-154, Asn-169, and Asn-227. Asp-105 is a binding site for Mg(2+). Asn-227 provides a ligand contact to Mg(2+). The linker stretch occupies residues 230–250 (LQLAALERYLQNKQASKLLLE). Residues 251–456 (GVMIYDPARF…QGWQRPIKKK (206 aa)) are N-acetyltransferase. UDP-N-acetyl-alpha-D-glucosamine-binding residues include Arg-333 and Lys-351. His-363 serves as the catalytic Proton acceptor. Tyr-366 and Asn-377 together coordinate UDP-N-acetyl-alpha-D-glucosamine. Acetyl-CoA contacts are provided by residues Ala-380, 386-387 (NY), Ser-405, Ala-423, and Arg-440.

In the N-terminal section; belongs to the N-acetylglucosamine-1-phosphate uridyltransferase family. This sequence in the C-terminal section; belongs to the transferase hexapeptide repeat family. In terms of assembly, homotrimer. The cofactor is Mg(2+).

Its subcellular location is the cytoplasm. The enzyme catalyses alpha-D-glucosamine 1-phosphate + acetyl-CoA = N-acetyl-alpha-D-glucosamine 1-phosphate + CoA + H(+). It catalyses the reaction N-acetyl-alpha-D-glucosamine 1-phosphate + UTP + H(+) = UDP-N-acetyl-alpha-D-glucosamine + diphosphate. The protein operates within nucleotide-sugar biosynthesis; UDP-N-acetyl-alpha-D-glucosamine biosynthesis; N-acetyl-alpha-D-glucosamine 1-phosphate from alpha-D-glucosamine 6-phosphate (route II): step 2/2. It functions in the pathway nucleotide-sugar biosynthesis; UDP-N-acetyl-alpha-D-glucosamine biosynthesis; UDP-N-acetyl-alpha-D-glucosamine from N-acetyl-alpha-D-glucosamine 1-phosphate: step 1/1. Its pathway is bacterial outer membrane biogenesis; LPS lipid A biosynthesis. Its function is as follows. Catalyzes the last two sequential reactions in the de novo biosynthetic pathway for UDP-N-acetylglucosamine (UDP-GlcNAc). The C-terminal domain catalyzes the transfer of acetyl group from acetyl coenzyme A to glucosamine-1-phosphate (GlcN-1-P) to produce N-acetylglucosamine-1-phosphate (GlcNAc-1-P), which is converted into UDP-GlcNAc by the transfer of uridine 5-monophosphate (from uridine 5-triphosphate), a reaction catalyzed by the N-terminal domain. This Haemophilus influenzae (strain PittEE) protein is Bifunctional protein GlmU.